Here is a 651-residue protein sequence, read N- to C-terminus: Zinc metalloproteinase nas-32 (651 aa).

An N-terminal signal peptide occupies residues 1-21; sequence MRRFFICYIGFLSIFLDFILA. The propeptide occupies 22–202; it reads DKDNNSEEER…EQSSKSRRKK (181 aa). N-linked (GlcNAc...) asparagine glycans are attached at residues Asn-25, Asn-72, and Asn-251. A Peptidase M12A domain is found at 203–394; sequence RQIDNLAQFW…KMLNTHYSCS (192 aa). Cystine bridges form between Cys-245–Cys-393, Cys-264–Cys-283, Cys-395–Cys-412, Cys-415–Cys-426, Cys-434–Cys-467, and Cys-495–Cys-516. His-291 contacts Zn(2+). The active site involves Glu-292. Residues His-295 and His-301 each contribute to the Zn(2+) site. One can recognise an EGF-like domain in the interval 380 to 433; that stretch reads TFLDLKMLNTHYSCSCPTILSCGNGGFTNPANCSVCICPYGFGGALCTERTDYG. Asn-411 is a glycosylation site (N-linked (GlcNAc...) asparagine). Residues 434–554 form the CUB domain; the sequence is CGSTLTATDT…TTYTWSYRYV (121 aa). Asn-453 carries an N-linked (GlcNAc...) asparagine glycan. An N-linked (GlcNAc...) asparagine glycan is attached at Asn-557. 3 disulfide bridges follow: Cys-610–Cys-647, Cys-619–Cys-640, and Cys-628–Cys-644. Positions 610–647 constitute a ShKT domain; that stretch reads CKDRFPKSQCSTYSTNGMCTQQPPLAAEFSCAETCGFC.

It depends on Zn(2+) as a cofactor. Expressed in pharyngeal, anal depressor, intestinal and vulva muscles, head neurons and head mesodermal cell.

The protein localises to the secreted. Metalloprotease. This Caenorhabditis elegans protein is Zinc metalloproteinase nas-32 (nas-32).